Reading from the N-terminus, the 101-residue chain is Small ribosomal subunit protein uS14 (101 aa).

The protein belongs to the universal ribosomal protein uS14 family. As to quaternary structure, part of the 30S ribosomal subunit. Contacts proteins S3 and S10.

Binds 16S rRNA, required for the assembly of 30S particles and may also be responsible for determining the conformation of the 16S rRNA at the A site. The sequence is that of Small ribosomal subunit protein uS14 from Hydrogenovibrio crunogenus (strain DSM 25203 / XCL-2) (Thiomicrospira crunogena).